We begin with the raw amino-acid sequence, 732 residues long: S-adenosyl-L-methionine-dependent tRNA 4-demethylwyosine synthase TYW1 (732 aa).

Residues 79 to 237 enclose the Flavodoxin-like domain; sequence VKIFYGSQTG…DFRAWKTKFI (159 aa). FMN-binding positions include 85 to 89 and 176 to 208; these read SQTGT and VFGL…HRVM. The disordered stretch occupies residues 248 to 314; it reads RKKSCGGHCK…HQSLNSIVDV (67 aa). Positions 259-286 are enriched in basic and acidic residues; the sequence is GKCESHQHGSEEREEGSHEQDELHHRDT. The segment covering 287 to 301 has biased composition (acidic residues); sequence EEEEPFESSSEEEFG. The Radical SAM core domain maps to 400–644; it reads YGIESHRCME…VDLIPEYEIA (245 aa). Positions 416, 420, and 423 each coordinate [4Fe-4S] cluster.

It belongs to the TYW1 family. [4Fe-4S] cluster is required as a cofactor.

The catalysed reaction is N(1)-methylguanosine(37) in tRNA(Phe) + pyruvate + S-adenosyl-L-methionine = 4-demethylwyosine(37) in tRNA(Phe) + 5'-deoxyadenosine + L-methionine + CO2 + H2O. Its pathway is tRNA modification; wybutosine-tRNA(Phe) biosynthesis. Its function is as follows. Probable component of the wybutosine biosynthesis pathway. Wybutosine is a hyper modified guanosine with a tricyclic base found at the 3'-position adjacent to the anticodon of eukaryotic phenylalanine tRNA. Catalyzes the condensation of N-methylguanine with 2 carbon atoms from pyruvate to form the tricyclic 4-demethylwyosine, an intermediate in wybutosine biosynthesis. The sequence is that of S-adenosyl-L-methionine-dependent tRNA 4-demethylwyosine synthase TYW1 (TYW1) from Homo sapiens (Human).